We begin with the raw amino-acid sequence, 331 residues long: Peroxidase 69 (331 aa).

A signal peptide spans 1 to 23 (MGRGYNLLFVLVTFLVLVAAVTA). 4 disulfides stabilise this stretch: Cys46–Cys122, Cys79–Cys84, Cys128–Cys327, and Cys205–Cys237. His77 functions as the Proton acceptor in the catalytic mechanism. Ca(2+)-binding residues include Asp78, Val81, Gly83, Asp85, and Ser87. Asn93 is a glycosylation site (N-linked (GlcNAc...) asparagine). Residue Pro168 coordinates substrate. His198 serves as a coordination point for heme b. Thr199 provides a ligand contact to Ca(2+). An N-linked (GlcNAc...) asparagine glycan is attached at Asn216. The Ca(2+) site is built by Asp248, Ser251, and Asp256.

Belongs to the peroxidase family. Classical plant (class III) peroxidase subfamily. Heme b serves as cofactor. It depends on Ca(2+) as a cofactor. Mainly expressed in roots and slightly in leaves.

The protein localises to the secreted. It carries out the reaction 2 a phenolic donor + H2O2 = 2 a phenolic radical donor + 2 H2O. Its function is as follows. Removal of H(2)O(2), oxidation of toxic reductants, biosynthesis and degradation of lignin, suberization, auxin catabolism, response to environmental stresses such as wounding, pathogen attack and oxidative stress. These functions might be dependent on each isozyme/isoform in each plant tissue. In Arabidopsis thaliana (Mouse-ear cress), this protein is Peroxidase 69 (PER69).